Consider the following 428-residue polypeptide: MQELLTLQPIVRVNGTIHLPGSKSISNRALLLAAQALGKTCLINLLDSYDVRYMLDALHKLGINYCLSIDRRSCEIDGIGRPLRVDTALELYLGNSGIALRSLVAALCLQNKNIIITGDKRMKNRPIGHLVDALRQGSAQIHYLEKDNYPPLLLQGGFYNGDITIDCSLSSQFLTSLLMMAPLASQDRCIFVKGRLVSKPYIDMTLAMMKSFGIVVQHDQYKIFYIKGKSQYRSPGHYLVEGDATNASYFLAAAAIRGGTVRVTGVGSNSIQGDIRFADILANMGAIIRWGVNYIECTRNSLCSIDIDMNALPDTAMTIAIVALFTYNGVTTLRNIYNWRIKETNRLVAMATELRKVGAIVVEGKEYLSIKPPNMFKIAKINTYDDHRIAMCFALVALSNVSITIVNPKCTYKTFPDFFKLLKGISIT.

Positions 23, 24, and 28 each coordinate 3-phosphoshikimate. Lys23 contributes to the phosphoenolpyruvate binding site. Phosphoenolpyruvate-binding residues include Gly97 and Arg125. Residues Ser170, Ser171, Gln172, Ser198, Asp314, Asn338, and Lys342 each coordinate 3-phosphoshikimate. Gln172 serves as a coordination point for phosphoenolpyruvate. The active-site Proton acceptor is Asp314. Phosphoenolpyruvate contacts are provided by Arg346, Arg388, and Lys413.

This sequence belongs to the EPSP synthase family. As to quaternary structure, monomer.

It localises to the cytoplasm. The catalysed reaction is 3-phosphoshikimate + phosphoenolpyruvate = 5-O-(1-carboxyvinyl)-3-phosphoshikimate + phosphate. It functions in the pathway metabolic intermediate biosynthesis; chorismate biosynthesis; chorismate from D-erythrose 4-phosphate and phosphoenolpyruvate: step 6/7. Its function is as follows. Catalyzes the transfer of the enolpyruvyl moiety of phosphoenolpyruvate (PEP) to the 5-hydroxyl of shikimate-3-phosphate (S3P) to produce enolpyruvyl shikimate-3-phosphate and inorganic phosphate. The chain is 3-phosphoshikimate 1-carboxyvinyltransferase from Baumannia cicadellinicola subsp. Homalodisca coagulata.